The sequence spans 376 residues: MREEPSSAQLFKPLKVGRCHLQHRMIMAPTTRFRADGQGVPLPFVQEYYGQRASVPGTLLITEATDITPKAMGYKHVPGIWSEPQREAWREIVSRVHSKKCFIFCQLWATGRAADPDVLADMKDLISSSAVPVEEKGPLPRALTEDEIQQCIADFAQAARNAINAGFDGVEIHGANGYLIDQFTQKSCNHRQDRWGGSIENRARFAVEVTRAVIEAVGADRVGVKLSPYSQYLGMGTMDELVPQFEYLIAQMRRLDVAYLHLANSRWLDEEKPHPDPNHEVFVRVWGQSSPILLAGGYDAASAEKVTEQMAAATYTNVAIAFGRYFISTPDLPFRVMAGIQLQKYDRASFYSTLSREGYLDYPFSAEYMALHNFPV.

Residues P29–T31, A64, Q106, and H173 each bind FMN. Positions 173 and 176 each coordinate substrate. Residue Y178 is the Proton donor of the active site. FMN contacts are provided by residues K225, G297, G323 to R324, and R324. Y351 is a substrate binding site.

It belongs to the NADH:flavin oxidoreductase/NADH oxidase family. FMN serves as cofactor.

The enzyme catalyses dihydrochanoclavine-I aldehyde + NADP(+) = chanoclavine-I aldehyde + NADPH + H(+). Its pathway is alkaloid biosynthesis; ergot alkaloid biosynthesis. In terms of biological role, aldehyde reductase; part of the gene cluster that mediates the biosynthesis of fumiclavanine C, a fungal ergot alkaloid. DmaW catalyzes the first step of ergot alkaloid biosynthesis by condensing dimethylallyl diphosphate (DMAP) and tryptophan to form 4-dimethylallyl-L-tryptophan. The second step is catalyzed by the methyltransferase easF that methylates 4-dimethylallyl-L-tryptophan in the presence of S-adenosyl-L-methionine, resulting in the formation of 4-dimethylallyl-L-abrine. The catalase easC and the FAD-dependent oxidoreductase easE then transform 4-dimethylallyl-L-abrine to chanoclavine-I which is further oxidized by EasD in the presence of NAD(+), resulting in the formation of chanoclavine-I aldehyde. EasA reduces chanoclavine-I aldehyde to dihydrochanoclavine-I aldehyde that spontaneously dehydrates to form 6,8-dimethyl-6,7-didehydroergoline. EasG then catalyzes the reduction of 6,8-dimethyl-6,7-didehydroergoline to form festuclavine. Hydrolysis of festuclavine by easM then leads to the formation of fumigaclavine B which is in turn acetylated by easN to fumigaclavine A. Finally, easL catalyzes the conversion of fumigaclavine A into fumigaclavine C by attaching a dimethylallyl moiety to C-2 of the indole nucleus. The chain is Chanoclavine-I aldehyde reductase easA from Aspergillus fumigatus (strain ATCC MYA-4609 / CBS 101355 / FGSC A1100 / Af293) (Neosartorya fumigata).